A 392-amino-acid chain; its full sequence is Solute carrier family 35 member B1 (392 aa).

Residues 1 to 40 (MSLTKKIKNEKSLKQEKQTDQLKSNLRNNNNNINNKSKPK) form a disordered region. Positions 7–20 (IKNEKSLKQEKQTD) are enriched in basic and acidic residues. A compositionally biased stretch (low complexity) spans 25-35 (NLRNNNNNINN). 9 consecutive transmembrane segments (helical) span residues 57–77 (ELFF…YGLV), 97–117 (AFLL…VSLV), 124–144 (NTPF…TFLS), 155–175 (TQVL…LLLF), 179–199 (YPFL…LFML), 215–235 (HLFG…MGPF), 247–267 (ATSM…IMAF), 285–305 (VIKL…FIFL), and 341–361 (LQWA…YISY). The Di-lysine motif motif lies at 389–392 (KKSL).

Belongs to the nucleotide-sugar transporter family. SLC35B subfamily.

The protein localises to the endoplasmic reticulum membrane. Its function is as follows. Probable sugar transporter. The chain is Solute carrier family 35 member B1 (slc35b1) from Dictyostelium discoideum (Social amoeba).